A 314-amino-acid chain; its full sequence is Acetaldehyde dehydrogenase 1 (314 aa).

16 to 19 (SGNI) contacts NAD(+). Cys134 serves as the catalytic Acyl-thioester intermediate. Residues 165 to 173 (SAGPGTRAN) and Asn292 each bind NAD(+).

Belongs to the acetaldehyde dehydrogenase family.

The catalysed reaction is acetaldehyde + NAD(+) + CoA = acetyl-CoA + NADH + H(+). This Cupriavidus necator (strain ATCC 17699 / DSM 428 / KCTC 22496 / NCIMB 10442 / H16 / Stanier 337) (Ralstonia eutropha) protein is Acetaldehyde dehydrogenase 1 (mhpF).